Consider the following 434-residue polypeptide: [Pyruvate dehydrogenase (acetyl-transferring)] kinase isozyme 1, mitochondrial (434 aa).

The transit peptide at 1–26 directs the protein to the mitochondrion; that stretch reads MRLARLLRGGTSVRPLCAVPCASRSL. Y136 bears the Phosphotyrosine; by FGFR1 mark. One can recognise a Histidine kinase domain in the interval 161–391; the sequence is TEYKESFGVD…DAVIYIKALS (231 aa). A Phosphotyrosine; by FGFR1, ABL1, FLT3 and JAK2 modification is found at Y241. Residue Y242 is modified to Phosphotyrosine; by FGFR1. Residues 277-284, D316, 335-336, and 352-357 each bind ATP; these read ELFKNAMR, ST, and GFGYGL. T336 carries the post-translational modification Phosphothreonine. K403 carries the post-translational modification N6-succinyllysine.

This sequence belongs to the PDK/BCKDK protein kinase family. As to quaternary structure, homodimer, and heterodimer with PDK2. Interacts with the pyruvate dehydrogenase complex subunit DLAT, and is part of the multimeric pyruvate dehydrogenase complex that contains multiple copies of pyruvate dehydrogenase (E1), dihydrolipoamide acetyltransferase (DLAT, E2) and lipoamide dehydrogenase (DLD, E3). Interacts with phosphoglycerate kinase PGK1; the interaction is direct, occurs under hypoxic conditions and leads to PDK1-mediated inhibition of pyruvate dehydrogenase complex activity. Phosphorylated by constitutively activated ABL1, FGFR1, FLT3 and JAK2 (in vitro), and this may also occur in cancer cells that express constitutively activated ABL1, FGFR1, FLT3 and JAK2. Phosphorylation at Tyr-241 and Tyr-242 strongly increases kinase activity, while phosphorylation at Tyr-136 has a lesser effect. Phosphorylated under hypoxic conditions at Thr-336 by phosphoglycerate kinase PGK1 which has an activating effect. As to expression, detected in pancreas islets (at protein level). Expressed predominantly in the heart.

The protein resides in the mitochondrion matrix. The enzyme catalyses L-seryl-[pyruvate dehydrogenase E1 alpha subunit] + ATP = O-phospho-L-seryl-[pyruvate dehydrogenase E1 alpha subunit] + ADP + H(+). Its activity is regulated as follows. Activated by binding to the pyruvate dehydrogenase complex subunit DLAT. Strongly activated by NADH plus acetyl-coenzyme A. Inhibited by dichloroacetate. Its function is as follows. Kinase that plays a key role in regulation of glucose and fatty acid metabolism and homeostasis via phosphorylation of the pyruvate dehydrogenase subunits PDHA1 and PDHA2. This inhibits pyruvate dehydrogenase activity, and thereby regulates metabolite flux through the tricarboxylic acid cycle, down-regulates aerobic respiration and inhibits the formation of acetyl-coenzyme A from pyruvate. Plays an important role in cellular responses to hypoxia and is important for cell proliferation under hypoxia. This chain is [Pyruvate dehydrogenase (acetyl-transferring)] kinase isozyme 1, mitochondrial (Pdk1), found in Rattus norvegicus (Rat).